Consider the following 248-residue polypeptide: tRNA pseudouridine synthase A (248 aa).

The Nucleophile role is filled by D55. Residue Y114 participates in substrate binding.

This sequence belongs to the tRNA pseudouridine synthase TruA family. In terms of assembly, homodimer.

The enzyme catalyses uridine(38/39/40) in tRNA = pseudouridine(38/39/40) in tRNA. In terms of biological role, formation of pseudouridine at positions 38, 39 and 40 in the anticodon stem and loop of transfer RNAs. The polypeptide is tRNA pseudouridine synthase A (Rhodopseudomonas palustris (strain ATCC BAA-98 / CGA009)).